Here is a 157-residue protein sequence, read N- to C-terminus: D-aminoacyl-tRNA deacylase (157 aa).

A Gly-cisPro motif, important for rejection of L-amino acids motif is present at residues 137-138 (GP).

It belongs to the DTD family. In terms of assembly, homodimer.

The protein localises to the cytoplasm. It catalyses the reaction glycyl-tRNA(Ala) + H2O = tRNA(Ala) + glycine + H(+). The enzyme catalyses a D-aminoacyl-tRNA + H2O = a tRNA + a D-alpha-amino acid + H(+). Its function is as follows. An aminoacyl-tRNA editing enzyme that deacylates mischarged D-aminoacyl-tRNAs. Also deacylates mischarged glycyl-tRNA(Ala), protecting cells against glycine mischarging by AlaRS. Acts via tRNA-based rather than protein-based catalysis; rejects L-amino acids rather than detecting D-amino acids in the active site. By recycling D-aminoacyl-tRNA to D-amino acids and free tRNA molecules, this enzyme counteracts the toxicity associated with the formation of D-aminoacyl-tRNA entities in vivo and helps enforce protein L-homochirality. This is D-aminoacyl-tRNA deacylase from Cyanothece sp. (strain PCC 7425 / ATCC 29141).